Reading from the N-terminus, the 200-residue chain is Recombination protein RecR (200 aa).

The C4-type zinc finger occupies 57 to 72; the sequence is CSHCRTFTENERCEIC. A Toprim domain is found at 81–176; it reads GLLCVVESPA…KVSRIAHGVP (96 aa).

This sequence belongs to the RecR family.

May play a role in DNA repair. It seems to be involved in an RecBC-independent recombinational process of DNA repair. It may act with RecF and RecO. This is Recombination protein RecR from Aeromonas hydrophila subsp. hydrophila (strain ATCC 7966 / DSM 30187 / BCRC 13018 / CCUG 14551 / JCM 1027 / KCTC 2358 / NCIMB 9240 / NCTC 8049).